A 252-amino-acid polypeptide reads, in one-letter code: 2-succinyl-6-hydroxy-2,4-cyclohexadiene-1-carboxylate synthase (252 aa).

It belongs to the AB hydrolase superfamily. MenH family. Monomer.

It carries out the reaction 5-enolpyruvoyl-6-hydroxy-2-succinyl-cyclohex-3-ene-1-carboxylate = (1R,6R)-6-hydroxy-2-succinyl-cyclohexa-2,4-diene-1-carboxylate + pyruvate. It functions in the pathway quinol/quinone metabolism; 1,4-dihydroxy-2-naphthoate biosynthesis; 1,4-dihydroxy-2-naphthoate from chorismate: step 3/7. It participates in quinol/quinone metabolism; menaquinone biosynthesis. Functionally, catalyzes a proton abstraction reaction that results in 2,5-elimination of pyruvate from 2-succinyl-5-enolpyruvyl-6-hydroxy-3-cyclohexene-1-carboxylate (SEPHCHC) and the formation of 2-succinyl-6-hydroxy-2,4-cyclohexadiene-1-carboxylate (SHCHC). The sequence is that of 2-succinyl-6-hydroxy-2,4-cyclohexadiene-1-carboxylate synthase from Klebsiella pneumoniae (strain 342).